We begin with the raw amino-acid sequence, 224 residues long: 7-cyano-7-deazaguanine synthase (224 aa).

7 to 17 (LSGGLDSSTIL) serves as a coordination point for ATP. 4 residues coordinate Zn(2+): C191, C199, C202, and C205.

This sequence belongs to the QueC family. Requires Zn(2+) as cofactor.

The enzyme catalyses 7-carboxy-7-deazaguanine + NH4(+) + ATP = 7-cyano-7-deazaguanine + ADP + phosphate + H2O + H(+). Its pathway is purine metabolism; 7-cyano-7-deazaguanine biosynthesis. Its function is as follows. Catalyzes the ATP-dependent conversion of 7-carboxy-7-deazaguanine (CDG) to 7-cyano-7-deazaguanine (preQ(0)). This Nostoc punctiforme (strain ATCC 29133 / PCC 73102) protein is 7-cyano-7-deazaguanine synthase.